An 83-amino-acid polypeptide reads, in one-letter code: Apolipoprotein C-I, basic form (83 aa).

An N-terminal signal peptide occupies residues 1 to 26 (MRLFLSLPVLVVVLSMVLEGPAPAQG).

This sequence belongs to the apolipoprotein C1 family.

The protein resides in the secreted. Functionally, inhibitor of lipoprotein binding to the low density lipoprotein (LDL) receptor, LDL receptor-related protein, and very low density lipoprotein (VLDL) receptor. Associates with high density lipoproteins (HDL) and the triacylglycerol-rich lipoproteins in the plasma and makes up about 10% of the protein of the VLDL and 2% of that of HDL. Appears to interfere directly with fatty acid uptake and is also the major plasma inhibitor of cholesteryl ester transfer protein (CETP). Binds free fatty acids and reduces their intracellular esterification. Modulates the interaction of APOE with beta-migrating VLDL and inhibits binding of beta-VLDL to the LDL receptor-related protein. The chain is Apolipoprotein C-I, basic form (APOC1B) from Colobus guereza (Mantled guereza).